Consider the following 166-residue polypeptide: 2-amino-4-hydroxy-6-hydroxymethyldihydropteridine pyrophosphokinase (166 aa).

Belongs to the HPPK family.

It catalyses the reaction 6-hydroxymethyl-7,8-dihydropterin + ATP = (7,8-dihydropterin-6-yl)methyl diphosphate + AMP + H(+). Its pathway is cofactor biosynthesis; tetrahydrofolate biosynthesis; 2-amino-4-hydroxy-6-hydroxymethyl-7,8-dihydropteridine diphosphate from 7,8-dihydroneopterin triphosphate: step 4/4. Its function is as follows. Catalyzes the transfer of pyrophosphate from adenosine triphosphate (ATP) to 6-hydroxymethyl-7,8-dihydropterin, an enzymatic step in folate biosynthesis pathway. The protein is 2-amino-4-hydroxy-6-hydroxymethyldihydropteridine pyrophosphokinase (folK) of Streptococcus pyogenes serotype M6 (strain ATCC BAA-946 / MGAS10394).